A 428-amino-acid polypeptide reads, in one-letter code: GTPase Obg (428 aa).

An Obg domain is found at 1–158 (MFIDKAKVFI…LSIVLELKLL (158 aa)). Positions 159-331 (ADVGLLGFPN…VIKEAARMLK (173 aa)) constitute an OBG-type G domain. GTP is bound by residues 165–172 (GFPNVGKS), 190–194 (FTTLK), 212–215 (DIPG), 282–285 (NKSD), and 312–314 (SAA). Ser-172 and Thr-192 together coordinate Mg(2+). The OCT domain occupies 345–428 (MYIPEEKRFT…LNDFEFEYLL (84 aa)).

The protein belongs to the TRAFAC class OBG-HflX-like GTPase superfamily. OBG GTPase family. In terms of assembly, monomer. It depends on Mg(2+) as a cofactor.

The protein resides in the cytoplasm. Functionally, an essential GTPase which binds GTP, GDP and possibly (p)ppGpp with moderate affinity, with high nucleotide exchange rates and a fairly low GTP hydrolysis rate. Plays a role in control of the cell cycle, stress response, ribosome biogenesis and in those bacteria that undergo differentiation, in morphogenesis control. The polypeptide is GTPase Obg (Clostridium botulinum (strain Eklund 17B / Type B)).